A 551-amino-acid polypeptide reads, in one-letter code: Preprotein translocase subunit SCY1, chloroplastic (551 aa).

A chloroplast-targeting transit peptide spans 1 to 67; it reads MITVSEVSSY…WNLGLVINSR (67 aa). 10 helical membrane-spanning segments follow: residues 142 to 162, 192 to 212, 241 to 261, 268 to 288, 295 to 315, 328 to 348, 382 to 402, 415 to 435, 482 to 502, and 503 to 523; these read FLKL…PLGG, LGIC…FQLL, ASVG…RPYV, WVVS…YIGE, LGNG…PASF, YTGL…IVYV, SAGV…ATLA, FALT…IAFF, VLGS…EQIT, and HLTA…GCAT.

Belongs to the SecY/SEC61-alpha family. In terms of assembly, part of the Sec protein translocation apparatus. Interacts with SECE1, ALB3 and probably with SECA1.

It localises to the plastid. Its subcellular location is the chloroplast thylakoid membrane. In terms of biological role, involved in protein export. Probably interacts with other proteins to allow the translocation of proteins across the chloroplast thylakoid membranes. Required for normal greening during embryogenesis. Central subunit of the protein translocation channel SecYE. Consists of two halves formed by TMs 1-5 and 6-10. These two domains form a lateral gate at the front which open onto the bilayer between TMs 2 and 7, and are clamped together by SecE at the back. The channel is closed by both a pore ring composed of hydrophobic SecY resides and a short helix (helix 2A) on the extracellular side of the membrane which forms a plug. This chain is Preprotein translocase subunit SCY1, chloroplastic (SCY1), found in Arabidopsis thaliana (Mouse-ear cress).